Reading from the N-terminus, the 183-residue chain is Ribosome-recycling factor (183 aa).

The protein belongs to the RRF family.

Its subcellular location is the cytoplasm. In terms of biological role, responsible for the release of ribosomes from messenger RNA at the termination of protein biosynthesis. May increase the efficiency of translation by recycling ribosomes from one round of translation to another. In Buchnera aphidicola subsp. Baizongia pistaciae (strain Bp), this protein is Ribosome-recycling factor.